The sequence spans 448 residues: UDP-N-acetylglucosamine--dolichyl-phosphate N-acetylglucosaminephosphotransferase (448 aa).

The chain crosses the membrane as a helical span at residues 24-44 (ALVAAVGFGIAGYLATDMLIP). UDP-N-acetyl-alpha-D-glucosamine is bound by residues 58–60 (KDL) and E70. The next 2 helical transmembrane spans lie at 72 to 92 (IGAI…PFIF) and 129 to 149 (YLSA…DDLF). K156 contacts dolichyl phosphate. 2 helical membrane passes run 157-177 (FFLP…DFGV) and 202-222 (YVYM…LAGV). Position 210-218 (210-218 (IFCPNSINI)) interacts with dolichyl phosphate. N217 is a binding site for Mg(2+). A UDP-N-acetyl-alpha-D-glucosamine-binding site is contributed by N223. Helical transmembrane passes span 231–251 (IVLA…GPLA), 256–276 (HRFS…LWKW), 283–303 (VFVG…VGIL), and 309–329 (TMLL…PQLF). D287 contacts Mg(2+). Position 336 to 338 (336 to 338 (RHR)) interacts with UDP-N-acetyl-alpha-D-glucosamine. Transmembrane regions (helical) follow at residues 387–407 (EIIS…FGPM) and 419–439 (LQFC…AIIF).

This sequence belongs to the glycosyltransferase 4 family. Mg(2+) serves as cofactor.

It is found in the endoplasmic reticulum membrane. It catalyses the reaction a di-trans,poly-cis-dolichyl phosphate + UDP-N-acetyl-alpha-D-glucosamine = an N-acetyl-alpha-D-glucosaminyl-diphospho-di-trans,poly-cis-dolichol + UMP. The protein operates within protein modification; protein glycosylation. With respect to regulation, inhibited by natural nucleoside antibiotic tunicamycin, which acts as a structural analog and competitor of UDP-GlcNAc. Functionally, UDP-N-acetylglucosamine--dolichyl-phosphate N-acetylglucosaminephosphotransferase that operates in the biosynthetic pathway of dolichol-linked oligosaccharides, the glycan precursors employed in protein asparagine (N)-glycosylation. The assembly of dolichol-linked oligosaccharides begins on the cytosolic side of the endoplasmic reticulum membrane and finishes in its lumen. The sequential addition of sugars to dolichol pyrophosphate produces dolichol-linked oligosaccharides containing fourteen sugars, including two GlcNAcs, nine mannoses and three glucoses. Once assembled, the oligosaccharide is transferred from the lipid to nascent proteins by oligosaccharyltransferases. Catalyzes the initial step of dolichol-linked oligosaccharide biosynthesis, transfering GlcNAc-1-P from cytosolic UDP-GlcNAc onto the carrier lipid dolichyl phosphate (P-dolichol), yielding GlcNAc-P-P-dolichol embedded in the cytoplasmic leaflet of the endoplasmic reticulum membrane. The polypeptide is UDP-N-acetylglucosamine--dolichyl-phosphate N-acetylglucosaminephosphotransferase (ALG7) (Saccharomyces cerevisiae (strain ATCC 204508 / S288c) (Baker's yeast)).